The sequence spans 356 residues: Pyrimidine monooxygenase RutA (356 aa).

FMN is bound by residues 49-50 (IK), Asn115, Glu124, 140-141 (RY), and Ser190.

The protein belongs to the NtaA/SnaA/DszA monooxygenase family. RutA subfamily.

The catalysed reaction is uracil + FMNH2 + NADH + O2 = (Z)-3-ureidoacrylate + FMN + NAD(+) + H2O + H(+). It carries out the reaction thymine + FMNH2 + NADH + O2 = (Z)-2-methylureidoacrylate + FMN + NAD(+) + H2O + H(+). In terms of biological role, catalyzes the pyrimidine ring opening between N-3 and C-4 by an unusual flavin hydroperoxide-catalyzed mechanism, adding oxygen atoms in the process to yield ureidoacrylate peracid, that immediately reacts with FMN forming ureidoacrylate and FMN-N(5)-oxide. The FMN-N(5)-oxide reacts spontaneously with NADH to produce FMN. Requires the flavin reductase RutF to regenerate FMN in vivo. The chain is Pyrimidine monooxygenase RutA from Haliangium ochraceum (strain DSM 14365 / JCM 11303 / SMP-2).